The primary structure comprises 208 residues: Small ribosomal subunit protein uS4 (208 aa).

One can recognise an S4 RNA-binding domain in the interval 98-161 (QRLDNVVFRM…KSNPQVVRAL (64 aa)).

It belongs to the universal ribosomal protein uS4 family. As to quaternary structure, part of the 30S ribosomal subunit. Contacts protein S5. The interaction surface between S4 and S5 is involved in control of translational fidelity.

Functionally, one of the primary rRNA binding proteins, it binds directly to 16S rRNA where it nucleates assembly of the body of the 30S subunit. Its function is as follows. With S5 and S12 plays an important role in translational accuracy. The sequence is that of Small ribosomal subunit protein uS4 from Aliarcobacter butzleri (strain RM4018) (Arcobacter butzleri).